A 118-amino-acid chain; its full sequence is Large ribosomal subunit protein bL20 (118 aa).

This sequence belongs to the bacterial ribosomal protein bL20 family.

Its function is as follows. Binds directly to 23S ribosomal RNA and is necessary for the in vitro assembly process of the 50S ribosomal subunit. It is not involved in the protein synthesizing functions of that subunit. The protein is Large ribosomal subunit protein bL20 of Bacillus cytotoxicus (strain DSM 22905 / CIP 110041 / 391-98 / NVH 391-98).